The following is a 670-amino-acid chain: UvrABC system protein B (670 aa).

Residues 26-183 (EGLEDGLAHQ…RRLAELQYAR (158 aa)) enclose the Helicase ATP-binding domain. 39 to 46 (GVTGSGKT) provides a ligand contact to ATP. Residues 92 to 115 (YYDYYQPEAYVPSSDTFIEKDAAV) carry the Beta-hairpin motif. Residues 431-597 (QVDDLLSEIR…GLNKKVSDVL (167 aa)) enclose the Helicase C-terminal domain. A UVR domain is found at 630–665 (DQKIRELEAQMYTHAQNLEFELAAGLRDEIHQLREQ).

Belongs to the UvrB family. As to quaternary structure, forms a heterotetramer with UvrA during the search for lesions. Interacts with UvrC in an incision complex.

The protein resides in the cytoplasm. Its function is as follows. The UvrABC repair system catalyzes the recognition and processing of DNA lesions. A damage recognition complex composed of 2 UvrA and 2 UvrB subunits scans DNA for abnormalities. Upon binding of the UvrA(2)B(2) complex to a putative damaged site, the DNA wraps around one UvrB monomer. DNA wrap is dependent on ATP binding by UvrB and probably causes local melting of the DNA helix, facilitating insertion of UvrB beta-hairpin between the DNA strands. Then UvrB probes one DNA strand for the presence of a lesion. If a lesion is found the UvrA subunits dissociate and the UvrB-DNA preincision complex is formed. This complex is subsequently bound by UvrC and the second UvrB is released. If no lesion is found, the DNA wraps around the other UvrB subunit that will check the other stand for damage. The protein is UvrABC system protein B of Serratia proteamaculans (strain 568).